Here is a 196-residue protein sequence, read N- to C-terminus: dITP/XTP pyrophosphatase (196 aa).

7-12 (THNPGK) contributes to the substrate binding site. Positions 40 and 69 each coordinate Mg(2+). Residue Asp69 is the Proton acceptor of the active site. Substrate is bound by residues Ser70, 150 to 153 (FGYD), Lys173, and 178 to 179 (HR).

This sequence belongs to the HAM1 NTPase family. Homodimer. Requires Mg(2+) as cofactor.

It carries out the reaction XTP + H2O = XMP + diphosphate + H(+). The catalysed reaction is dITP + H2O = dIMP + diphosphate + H(+). The enzyme catalyses ITP + H2O = IMP + diphosphate + H(+). Pyrophosphatase that catalyzes the hydrolysis of nucleoside triphosphates to their monophosphate derivatives, with a high preference for the non-canonical purine nucleotides XTP (xanthosine triphosphate), dITP (deoxyinosine triphosphate) and ITP. Seems to function as a house-cleaning enzyme that removes non-canonical purine nucleotides from the nucleotide pool, thus preventing their incorporation into DNA/RNA and avoiding chromosomal lesions. This chain is dITP/XTP pyrophosphatase, found in Exiguobacterium sp. (strain ATCC BAA-1283 / AT1b).